A 121-amino-acid chain; its full sequence is Large ribosomal subunit protein bL20 (121 aa).

It belongs to the bacterial ribosomal protein bL20 family.

Its function is as follows. Binds directly to 23S ribosomal RNA and is necessary for the in vitro assembly process of the 50S ribosomal subunit. It is not involved in the protein synthesizing functions of that subunit. In Ruegeria pomeroyi (strain ATCC 700808 / DSM 15171 / DSS-3) (Silicibacter pomeroyi), this protein is Large ribosomal subunit protein bL20.